The chain runs to 139 residues: MDIKNVHIKNHEQTAHAPSTLEKIRKVKQGGKLSEQTKTFGSTYRRLDPNQPSPTVTRSGYRDFIHPFEDRMLTVRELACLQTFPLDWEFTGTRLDSYSSKRKVTMTQFGQVGNAVPPLLAEAVAKAVSEQLLDVIDEK.

An SAM-dependent MTase C5-type domain is found at 1–135 (MDIKNVHIKN…KAVSEQLLDV (135 aa)). The disordered stretch occupies residues 38–58 (KTFGSTYRRLDPNQPSPTVTR).

It belongs to the class I-like SAM-binding methyltransferase superfamily. C5-methyltransferase family. Heterodimer of an alpha and a beta subunit.

It catalyses the reaction a 2'-deoxycytidine in DNA + S-adenosyl-L-methionine = a 5-methyl-2'-deoxycytidine in DNA + S-adenosyl-L-homocysteine + H(+). Functionally, a methylase, recognizes the double-stranded sequence 5'-CYCGRG-3', methylates C-1 on both strands, and protects the DNA from cleavage by the AquI endonuclease. The protein is Type II methyltransferase M.AquIB (aquIMB) of Picosynechococcus sp. (strain ATCC 27264 / PCC 7002 / PR-6) (Agmenellum quadruplicatum).